The sequence spans 528 residues: Low affinity inorganic phosphate transporter 4 (528 aa).

Over 1 to 18 the chain is Cytoplasmic; it reads MGLEVLEALDSARTQWYH. A helical transmembrane segment spans residues 19–39; sequence VTAIVIAGMGFFTDAYDLFCI. The Extracellular segment spans residues 40-68; it reads STVSKLLGRLYYFDPSTNKPGKLPPSVNN. The chain crosses the membrane as a helical span at residues 69-89; it reads VVTGVALVGTLSGQLVFGWLG. At 90–96 the chain is on the cytoplasmic side; sequence DKLGRKK. A helical transmembrane segment spans residues 97-117; sequence VYGVTLIIMVACAICSGLSFG. Residues 118-122 are Extracellular-facing; the sequence is SSAKS. Residues 123-143 form a helical membrane-spanning segment; the sequence is VMITLCFFRFWLGFGIGGDYP. The Cytoplasmic portion of the chain corresponds to 144-158; sequence LSATIMSEYANKRTR. Residues 159–179 form a helical membrane-spanning segment; the sequence is GAFIAAVFAMQGVGIIFAGLV. Residues 180 to 208 are Extracellular-facing; the sequence is SMVFSGIFKAYYQAPRFNEDPILSTQPEG. A helical membrane pass occupies residues 209-229; it reads DLLWRLILMIGAVPAAMTYYW. The Cytoplasmic segment spans residues 230–292; the sequence is RMKMPETGRY…SEFFNRHGRH (63 aa). A helical membrane pass occupies residues 293–313; sequence LIGTMSCWFLLDIAFYSQNLT. Over 314-341 the chain is Extracellular; the sequence is QKDIYPAMGLIRQDKEMNAIDEVFQTSR. The helical transmembrane segment at 342–362 threads the bilayer; it reads AMFVVALFGTFPGYWFTVFFI. At 363-371 the chain is on the cytoplasmic side; sequence EKLGRFKIQ. The helical transmembrane segment at 372–392 threads the bilayer; the sequence is LVGFFMMSFFMFVIGVKYEYL. At 393–401 the chain is on the extracellular side; the sequence is KDENKNLFA. A helical transmembrane segment spans residues 402–422; the sequence is LLYGLTFFFANFGPNSTTFVL. At 423-433 the chain is on the cytoplasmic side; it reads PAELFPTRVRS. A helical transmembrane segment spans residues 434–454; the sequence is TCHAFSAASGKAGAMVGAFGI. The Extracellular portion of the chain corresponds to 455–468; it reads QYYTLDGTPRKIRR. The helical transmembrane segment at 469–489 threads the bilayer; that stretch reads AMMILAFTNLIGFFCTFLVTE. The Cytoplasmic portion of the chain corresponds to 490–528; that stretch reads TKGRSLEEISGEDGRESELTATPNDRAPGIRQDSRTEKM. The span at 497–507 shows a compositional bias: basic and acidic residues; it reads EISGEDGRESE. The interval 497–528 is disordered; sequence EISGEDGRESELTATPNDRAPGIRQDSRTEKM.

This sequence belongs to the major facilitator superfamily. Phosphate:H(+) symporter (TC 2.A.1.9) family. In terms of tissue distribution, mostly expressed in mycorrhizal roots. Also observed in root tips of non-mycorrhizal roots, in a phosphate (Pi) depended-manner, highest expression levels being observed in low Pi conditions.

It localises to the cell membrane. The enzyme catalyses phosphate(in) + H(+)(in) = phosphate(out) + H(+)(out). Low-affinity transporter for external inorganic phosphate (Pi) probably involved in the acquisition of phosphate released by arbuscular mycorrhizal (AM) fungi (e.g. Gigaspora gigantea, Glomus versiforme and G.intraradices) during AM symbiosis; required for propper mycorrhizal arbuscule morphology. Acts as a Pi-sensing machinery at the root tip level, independently of AM fungi, involved in the regulation of early root branching and lateral roots formation. The protein is Low affinity inorganic phosphate transporter 4 of Medicago truncatula (Barrel medic).